The primary structure comprises 476 residues: Mitochondrial-processing peptidase subunit beta (476 aa).

A mitochondrion-targeting transit peptide spans 1-28 (MASRRLALNLAQGVKARAGGVINPFRRG). His84 lines the Zn(2+) pocket. The active-site Proton acceptor is the Glu87. Residues His88 and Glu164 each coordinate Zn(2+).

Belongs to the peptidase M16 family. Heterodimer of mpp (alpha) and pep (beta) subunits, forming the mitochondrial processing protease (MPP) in which mpp is involved in substrate recognition and binding and pep is the catalytic subunit. Component of the ubiquinol-cytochrome c oxidoreductase (cytochrome b-c1 complex, complex III, CIII), a multisubunit enzyme composed of 10 subunits. The complex is composed of 3 respiratory subunits cytochrome b (cob), cytochrome c1 (cyt-1) and Rieske protein (fes-1), 2 core protein subunits pep and ucr-1, and 5 low-molecular weight protein subunits qcr6, qcr7, qcr8, qcr9 and probably NCU16844/qcr10. The complex exists as an obligatory dimer and forms supercomplexes (SCs) in the inner mitochondrial membrane with NADH-ubiquinone oxidoreductase (complex I, CI) and cytochrome c oxidase (complex IV, CIV), resulting in different assemblies (supercomplexes SCI(1)III(2), SCIII(2)IV(1) and SCIII(2)IV(2) as well as higher order I(x)III(y)IV(z) megacomplexes). The cofactor is Zn(2+).

The protein resides in the mitochondrion matrix. It localises to the mitochondrion inner membrane. The enzyme catalyses Release of N-terminal transit peptides from precursor proteins imported into the mitochondrion, typically with Arg in position P2.. Binding to mpp is required for catalytic activity. Inhibited by metal chelator ethylenediaminetetraacetic acid (EDTA). In terms of biological role, catalytic subunit of the essential mitochondrial processing protease (MPP), which cleaves the mitochondrial sequence off newly imported precursors proteins. Preferentially, cleaves after an arginine at position P2. Component of the ubiquinol-cytochrome c oxidoreductase, a multisubunit transmembrane complex that is part of the mitochondrial electron transport chain which drives oxidative phosphorylation. The respiratory chain contains 3 multisubunit complexes succinate dehydrogenase (complex II, CII), ubiquinol-cytochrome c oxidoreductase (cytochrome b-c1 complex, complex III, CIII) and cytochrome c oxidase (complex IV, CIV), that cooperate to transfer electrons derived from NADH and succinate to molecular oxygen, creating an electrochemical gradient over the inner membrane that drives transmembrane transport and the ATP synthase. The cytochrome b-c1 complex catalyzes electron transfer from ubiquinol to cytochrome c, linking this redox reaction to translocation of protons across the mitochondrial inner membrane, with protons being carried across the membrane as hydrogens on the quinol. In the process called Q cycle, 2 protons are consumed from the matrix, 4 protons are released into the intermembrane space and 2 electrons are passed to cytochrome c. The chain is Mitochondrial-processing peptidase subunit beta from Neurospora crassa (strain ATCC 24698 / 74-OR23-1A / CBS 708.71 / DSM 1257 / FGSC 987).